The primary structure comprises 116 residues: Aspartate 1-decarboxylase (116 aa).

Ser25 serves as the catalytic Schiff-base intermediate with substrate; via pyruvic acid. Ser25 is modified (pyruvic acid (Ser)). Residue Thr57 coordinates substrate. Catalysis depends on Tyr58, which acts as the Proton donor. Residue 73 to 75 (GAA) coordinates substrate.

This sequence belongs to the PanD family. As to quaternary structure, heterooctamer of four alpha and four beta subunits. The cofactor is pyruvate. Is synthesized initially as an inactive proenzyme, which is activated by self-cleavage at a specific serine bond to produce a beta-subunit with a hydroxyl group at its C-terminus and an alpha-subunit with a pyruvoyl group at its N-terminus.

The protein localises to the cytoplasm. The enzyme catalyses L-aspartate + H(+) = beta-alanine + CO2. It participates in cofactor biosynthesis; (R)-pantothenate biosynthesis; beta-alanine from L-aspartate: step 1/1. Functionally, catalyzes the pyruvoyl-dependent decarboxylation of aspartate to produce beta-alanine. This Christiangramia forsetii (strain DSM 17595 / CGMCC 1.15422 / KT0803) (Gramella forsetii) protein is Aspartate 1-decarboxylase.